Consider the following 438-residue polypeptide: Tol-Pal system protein TolB (438 aa).

The first 21 residues, 1–21 (MVKRSLLVLALLICLPATLFA), serve as a signal peptide directing secretion.

This sequence belongs to the TolB family. In terms of assembly, the Tol-Pal system is composed of five core proteins: the inner membrane proteins TolA, TolQ and TolR, the periplasmic protein TolB and the outer membrane protein Pal. They form a network linking the inner and outer membranes and the peptidoglycan layer.

It is found in the periplasm. Its function is as follows. Part of the Tol-Pal system, which plays a role in outer membrane invagination during cell division and is important for maintaining outer membrane integrity. This is Tol-Pal system protein TolB from Desulfosudis oleivorans (strain DSM 6200 / JCM 39069 / Hxd3) (Desulfococcus oleovorans).